The chain runs to 551 residues: Bestrophin-1 (551 aa).

The Cytoplasmic segment spans residues 1–31 (MTITYTNKVANARLGSFSSLLLCWRGSIYKL). Residue alanine 10 coordinates Ca(2+). The chain crosses the membrane as a helical span at residues 32-51 (LYGEFLVFIFLYYSIRGLYR). Over 52-60 (MVLSSDQQL) the chain is Extracellular. The chain crosses the membrane as a helical span at residues 61–82 (LFEKLALYCDSYIQLIPISFVL). At 83–237 (GFYVTLVVSR…DWISIPLVYT (155 aa)) the chain is on the cytoplasmic side. The helical transmembrane segment at 238–255 (QVVTVAVYSFFLACLIGR) threads the bilayer. Topologically, residues 256 to 274 (QFLNPNKDYPGHEMDLVVP) are extracellular. A helical membrane pass occupies residues 275–288 (VFTILQFLFYMGWL). Over 289–551 (KVAEQLINPF…EAGTKPVLYE (263 aa)) the chain is Cytoplasmic. Ca(2+) is bound by residues glutamine 293, asparagine 296, aspartate 301, and aspartate 304. The interval 346–379 (PYTAASARSRRHSFMGSTFNISLKKEDLELWSKE) is auto-inhibitory segment. Positions 459-489 (SHCGPQAPSSHPTEQSAPSSSDTGDGPSTDY) are disordered. A compositionally biased stretch (polar residues) spans 465–475 (APSSHPTEQSA). Over residues 476-488 (PSSSDTGDGPSTD) the composition is skewed to low complexity.

This sequence belongs to the anion channel-forming bestrophin (TC 1.A.46) family. Calcium-sensitive chloride channel subfamily. As to quaternary structure, interacts with YWHAG; this interaction promotes the ligand-gated L-glutamate channel activity leading to the positive regulation of NMDA glutamate receptor activity through the L-glutamate secretion.

Its subcellular location is the cell membrane. The protein resides in the basolateral cell membrane. The catalysed reaction is 4-aminobutanoate(in) = 4-aminobutanoate(out). It catalyses the reaction L-glutamate(out) = L-glutamate(in). It carries out the reaction chloride(in) = chloride(out). The enzyme catalyses hydrogencarbonate(in) = hydrogencarbonate(out). The catalysed reaction is D-serine(in) = D-serine(out). Inactivated by sulfhydryl-reactive agents. Ligand-gated anion channel that allows the movement of anions across cell membranes when activated by calcium (Ca2+). Allows the movement of chloride and hydrogencarbonate. Found in a partially open conformation leading to significantly smaller chloride movement. Upon F2R/PAR-1 activation, the sequestered calcium is released into the cytosol of astrocytes, leading to the (Ca2+)-dependent release of L-glutamate into the synaptic cleft that targets the neuronal postsynaptic GRIN2A/NMDAR receptor resulting in the synaptic plasticity regulation. Upon activation of the norepinephrine-alpha-1 adrenergic receptor signaling pathway, transports as well D-serine than L-glutamate in a (Ca2+)-dependent manner, leading to activation of adjacent NMDAR receptors and therefore regulates the heterosynaptic long-term depression and metaplasticity during initial memory acquisition. Releases the 4-aminobutanoate neurotransmitter in a (Ca2+)-dependent manner, and participates in its tonic release from cerebellar glial cells. This is Bestrophin-1 from Mus musculus (Mouse).